Consider the following 284-residue polypeptide: Nucleotide-binding protein TTE1834 (284 aa).

8 to 15 contributes to the ATP binding site; the sequence is GLSGAGKT. Residue 58–61 participates in GTP binding; sequence DLRG.

It belongs to the RapZ-like family.

Its function is as follows. Displays ATPase and GTPase activities. The sequence is that of Nucleotide-binding protein TTE1834 from Caldanaerobacter subterraneus subsp. tengcongensis (strain DSM 15242 / JCM 11007 / NBRC 100824 / MB4) (Thermoanaerobacter tengcongensis).